We begin with the raw amino-acid sequence, 646 residues long: Acetyl-coenzyme A synthetase (646 aa).

CoA contacts are provided by residues 190-193 and Thr-309; that span reads RAGN. ATP is bound by residues 385–387, 409–414, Asp-498, and Arg-513; these read GEP and DTWWQT. Residue Ser-521 participates in CoA binding. ATP is bound at residue Arg-524. Mg(2+) contacts are provided by Val-535, His-537, and Val-540. Arg-582 is a CoA binding site. At Lys-607 the chain carries N6-acetyllysine.

The protein belongs to the ATP-dependent AMP-binding enzyme family. The cofactor is Mg(2+). Post-translationally, acetylated. Deacetylation by the SIR2-homolog deacetylase activates the enzyme.

The catalysed reaction is acetate + ATP + CoA = acetyl-CoA + AMP + diphosphate. Catalyzes the conversion of acetate into acetyl-CoA (AcCoA), an essential intermediate at the junction of anabolic and catabolic pathways. AcsA undergoes a two-step reaction. In the first half reaction, AcsA combines acetate with ATP to form acetyl-adenylate (AcAMP) intermediate. In the second half reaction, it can then transfer the acetyl group from AcAMP to the sulfhydryl group of CoA, forming the product AcCoA. This is Acetyl-coenzyme A synthetase from Pseudoalteromonas translucida (strain TAC 125).